A 124-amino-acid polypeptide reads, in one-letter code: Small ribosomal subunit protein uS11 (124 aa).

It belongs to the universal ribosomal protein uS11 family. In terms of assembly, part of the 30S ribosomal subunit.

Located on the platform of the 30S subunit. This chain is Small ribosomal subunit protein uS11, found in Methanococcus aeolicus (strain ATCC BAA-1280 / DSM 17508 / OCM 812 / Nankai-3).